The chain runs to 202 residues: FMN-dependent NADH:quinone oxidoreductase (202 aa).

Residues S10, 16–18 (SHS), and 96–99 (MYNF) each bind FMN.

It belongs to the azoreductase type 1 family. Homodimer. The cofactor is FMN.

It catalyses the reaction 2 a quinone + NADH + H(+) = 2 a 1,4-benzosemiquinone + NAD(+). It carries out the reaction N,N-dimethyl-1,4-phenylenediamine + anthranilate + 2 NAD(+) = 2-(4-dimethylaminophenyl)diazenylbenzoate + 2 NADH + 2 H(+). Functionally, quinone reductase that provides resistance to thiol-specific stress caused by electrophilic quinones. Also exhibits azoreductase activity. Catalyzes the reductive cleavage of the azo bond in aromatic azo compounds to the corresponding amines. The sequence is that of FMN-dependent NADH:quinone oxidoreductase from Hydrogenovibrio crunogenus (strain DSM 25203 / XCL-2) (Thiomicrospira crunogena).